Consider the following 249-residue polypeptide: Aspartate/glutamate leucyltransferase (249 aa).

It belongs to the R-transferase family. Bpt subfamily.

The protein localises to the cytoplasm. The catalysed reaction is N-terminal L-glutamyl-[protein] + L-leucyl-tRNA(Leu) = N-terminal L-leucyl-L-glutamyl-[protein] + tRNA(Leu) + H(+). The enzyme catalyses N-terminal L-aspartyl-[protein] + L-leucyl-tRNA(Leu) = N-terminal L-leucyl-L-aspartyl-[protein] + tRNA(Leu) + H(+). Functions in the N-end rule pathway of protein degradation where it conjugates Leu from its aminoacyl-tRNA to the N-termini of proteins containing an N-terminal aspartate or glutamate. The polypeptide is Aspartate/glutamate leucyltransferase (Brucella suis (strain ATCC 23445 / NCTC 10510)).